A 364-amino-acid chain; its full sequence is Oxidized polyvinyl alcohol hydrolase (364 aa).

The N-terminal stretch at 1–34 (MFKPVVKSRSSRSFCYLAGCLAMVAATLSSTAQA) is a signal peptide. Residues Ser-190 and Ser-293 each act as charge relay system in the active site.

The protein belongs to the peptidase S9A family. In terms of assembly, monomer.

The protein resides in the periplasm. The catalysed reaction is nonane-4,6-dione + H2O = pentan-2-one + butanoate + H(+). Catalyzes the hydrolysis of 4,6-nonanedione, a beta-diketone compound. Also mediates hydrolysis of oxidized polyvinyl alcohol (PVA) in the second step in the degradation of polyvinyl alcohol. Not active toward the monoketone structure. The protein is Oxidized polyvinyl alcohol hydrolase (oph) of Sphingopyxis sp. (strain 113P3).